The primary structure comprises 398 residues: Nocardicin C N-oxygenase (398 aa).

The interval 63–90 is disordered; the sequence is RARAAGREETPRVTPEAAPAGSMLSMDP. Heme-binding residues include His-93, Arg-97, Arg-289, His-345, and Cys-347.

Belongs to the cytochrome P450 family. Requires heme as cofactor.

The enzyme catalyses nocardicin C + 4 reduced [2Fe-2S]-[ferredoxin] + 2 O2 + 2 H(+) = nocardicin A + 4 oxidized [2Fe-2S]-[ferredoxin] + 3 H2O. The protein operates within antibiotic biosynthesis. Involved in the biosynthesis of the beta-lactam antibiotic nocardicin A. Catalyzes the conversion of nocardicin C to nocardicin A. Cannot use nocardicin G. The polypeptide is Nocardicin C N-oxygenase (Nocardia uniformis subsp. tsuyamanensis).